The chain runs to 181 residues: DFVLDNEGNPLSNGGTYYILSDITAFGGIRAAPTGNERCPLTVVQSRNELDKGIGTIISSPFRIRFIAEGNPLRLKFDSFAVIMLCVGIPTEWSVVEDLPEGPAVKIGENKDAVDGWFRIERVSDDEFNNYKLVFCTQQAEDDKCGDIGISIDHDDGTRRLVVSKNKPLVVQFQKVDKESL.

Cystine bridges form between cysteine 39–cysteine 86 and cysteine 136–cysteine 145.

The protein belongs to the protease inhibitor I3 (leguminous Kunitz-type inhibitor) family.

Functionally, inhibition of trypsin. This Glycine max (Soybean) protein is Trypsin inhibitor B.